We begin with the raw amino-acid sequence, 157 residues long: Beta-defensin 125 (157 aa).

Positions 1 to 20 (MNILMLTFIICGLLTQVTKG) are cleaved as a signal peptide. 3 cysteine pairs are disulfide-bonded: Cys-27–Cys-55, Cys-35–Cys-49, and Cys-39–Cys-56. Positions 109 to 157 (GETMTPETNTPETTMPPPETTTPETTMPPSETATSETMPPPSQRALTHN) are disordered. Low complexity-rich tracts occupy residues 110 to 121 (ETMTPETNTPET) and 129 to 145 (TTPE…TSET).

The protein belongs to the beta-defensin family.

Its subcellular location is the secreted. Functionally, has antibacterial activity. This chain is Beta-defensin 125 (DEFB125), found in Pan troglodytes (Chimpanzee).